The following is a 180-amino-acid chain: Putative phycocyanobilin lyase CpcS 2 (180 aa).

It belongs to the CpcS/CpeS biliprotein lyase family.

Covalently attaches a chromophore to Cys residue(s) of phycobiliproteins (Potential). In vitro does not act as a chromophore lyase for ApcA1, ApcA2, ApcB, ApcD, ApcF, CpcB or PecB, the lyase activity is therefore unsure. In Nostoc sp. (strain PCC 7120 / SAG 25.82 / UTEX 2576), this protein is Putative phycocyanobilin lyase CpcS 2 (cpeS2).